Here is a 476-residue protein sequence, read N- to C-terminus: MKKLEKITPLEENFAKWYTDVVKNGELIDYGPVKGTLIFKPNSYGIWENIQLQFNKILKAKGIKNVYLPLLIPESLMKAEFEHIEGFAPELATLTKVGSKNLSENIYLRPTSEVLFQKFFKAEIESYKDLPKIYNQWANVIRWEKTTNPFLRSTEFLWQEGHSSHESAIEARKFTREMLKTYCKFLRKFLAIPTIMGKKTPREKFSGAYSTYTLEAMMKDGKALQSGTTHYLAQNFSEAYDVNFKDSENKKQFVYQTSWGLSTRLIGAIIMTHGDNRGIIIPPFVAPCQIDILAFNPRRSAEIEKFVNQVEKILKKPFRVNVDRSDKTLGFKASQSEIQGVPLRIEIGPRDFENNQVTLVRRDTLEKQSVSINDIVKVSRETLQAIHNNLYEQAKIRLKNNIVEINDYEEFKQEIANHKFVISPLCCTTAEAEEEIQKETGATARCIPFDYQKPGENKCLICKCMTKRFVLFARAY.

Belongs to the class-II aminoacyl-tRNA synthetase family. ProS type 3 subfamily. As to quaternary structure, homodimer.

The protein resides in the cytoplasm. The catalysed reaction is tRNA(Pro) + L-proline + ATP = L-prolyl-tRNA(Pro) + AMP + diphosphate. In terms of biological role, catalyzes the attachment of proline to tRNA(Pro) in a two-step reaction: proline is first activated by ATP to form Pro-AMP and then transferred to the acceptor end of tRNA(Pro). The sequence is that of Proline--tRNA ligase from Mycoplasmopsis pulmonis (strain UAB CTIP) (Mycoplasma pulmonis).